The chain runs to 446 residues: 4-aminobutyrate aminotransferase (446 aa).

An N6-(pyridoxal phosphate)lysine modification is found at Lys291.

The protein belongs to the class-III pyridoxal-phosphate-dependent aminotransferase family. Pyridoxal 5'-phosphate serves as cofactor.

The enzyme catalyses 4-aminobutanoate + 2-oxoglutarate = succinate semialdehyde + L-glutamate. The catalysed reaction is (S)-3-amino-2-methylpropanoate + 2-oxoglutarate = 2-methyl-3-oxopropanoate + L-glutamate. It functions in the pathway amino-acid degradation; 4-aminobutanoate degradation. This chain is 4-aminobutyrate aminotransferase (gabT), found in Mycobacterium leprae (strain TN).